We begin with the raw amino-acid sequence, 305 residues long: Pseudouridine-5'-phosphate glycosidase (305 aa).

Glutamate 22 functions as the Proton donor in the catalytic mechanism. Residues lysine 84 and valine 104 each contribute to the substrate site. Residue aspartate 136 coordinates Mn(2+). Position 138 to 140 (138 to 140 (SAD)) interacts with substrate. Lysine 157 functions as the Nucleophile in the catalytic mechanism.

It belongs to the pseudouridine-5'-phosphate glycosidase family. Homotrimer. Requires Mn(2+) as cofactor.

It carries out the reaction D-ribose 5-phosphate + uracil = psi-UMP + H2O. Catalyzes the reversible cleavage of pseudouridine 5'-phosphate (PsiMP) to ribose 5-phosphate and uracil. Functions biologically in the cleavage direction, as part of a pseudouridine degradation pathway. The chain is Pseudouridine-5'-phosphate glycosidase from Chloroflexus aurantiacus (strain ATCC 29364 / DSM 637 / Y-400-fl).